Consider the following 446-residue polypeptide: Adenylosuccinate synthetase (446 aa).

GTP-binding positions include 21–27 (GDEGKGK) and 49–51 (GHT). Asp22 acts as the Proton acceptor in catalysis. Residues Asp22 and Gly49 each contribute to the Mg(2+) site. IMP is bound by residues 22-25 (DEGK), 47-50 (NAGH), Thr141, Arg155, Gln236, Thr251, and Arg319. The active-site Proton donor is the His50. Substrate is bound at residue 315-321 (VTTGRSR). Residues Arg321, 347 to 349 (KLD), and 429 to 431 (STS) contribute to the GTP site.

The protein belongs to the adenylosuccinate synthetase family. Homodimer. It depends on Mg(2+) as a cofactor.

It localises to the cytoplasm. The enzyme catalyses IMP + L-aspartate + GTP = N(6)-(1,2-dicarboxyethyl)-AMP + GDP + phosphate + 2 H(+). Its pathway is purine metabolism; AMP biosynthesis via de novo pathway; AMP from IMP: step 1/2. Its function is as follows. Plays an important role in the de novo pathway of purine nucleotide biosynthesis. Catalyzes the first committed step in the biosynthesis of AMP from IMP. This chain is Adenylosuccinate synthetase, found in Polaromonas naphthalenivorans (strain CJ2).